Consider the following 393-residue polypeptide: NAD(P)H-quinone oxidoreductase subunit H, chloroplastic (393 aa).

Belongs to the complex I 49 kDa subunit family. As to quaternary structure, NDH is composed of at least 16 different subunits, 5 of which are encoded in the nucleus.

It is found in the plastid. The protein localises to the chloroplast thylakoid membrane. The enzyme catalyses a plastoquinone + NADH + (n+1) H(+)(in) = a plastoquinol + NAD(+) + n H(+)(out). The catalysed reaction is a plastoquinone + NADPH + (n+1) H(+)(in) = a plastoquinol + NADP(+) + n H(+)(out). NDH shuttles electrons from NAD(P)H:plastoquinone, via FMN and iron-sulfur (Fe-S) centers, to quinones in the photosynthetic chain and possibly in a chloroplast respiratory chain. The immediate electron acceptor for the enzyme in this species is believed to be plastoquinone. Couples the redox reaction to proton translocation, and thus conserves the redox energy in a proton gradient. The protein is NAD(P)H-quinone oxidoreductase subunit H, chloroplastic of Acorus calamus var. americanus (American sweet flag).